A 372-amino-acid polypeptide reads, in one-letter code: Alanine dehydrogenase 1 (372 aa).

Residue H94 is part of the active site. Residue 170-200 (TYVIFGGGVAATNAANVALGLNAKVIIIELN) coordinates NAD(+).

Belongs to the AlaDH/PNT family.

The catalysed reaction is L-alanine + NAD(+) + H2O = pyruvate + NH4(+) + NADH + H(+). Its pathway is amino-acid degradation; L-alanine degradation via dehydrogenase pathway; NH(3) and pyruvate from L-alanine: step 1/1. Functionally, may play a role in cell wall synthesis as L-alanine is an important constituent of the peptidoglycan layer. The protein is Alanine dehydrogenase 1 (ald1) of Staphylococcus aureus (strain bovine RF122 / ET3-1).